The chain runs to 85 residues: Small ribosomal subunit protein uS17 (85 aa).

Belongs to the universal ribosomal protein uS17 family. As to quaternary structure, part of the 30S ribosomal subunit.

In terms of biological role, one of the primary rRNA binding proteins, it binds specifically to the 5'-end of 16S ribosomal RNA. This chain is Small ribosomal subunit protein uS17, found in Rhodospirillum centenum (strain ATCC 51521 / SW).